Consider the following 568-residue polypeptide: MLKSQIAPIPSYESQPVHKPSSSVNFITFNQDGSCIAVGNNKGYSIFTTNPFTKCYDSPPGEAIGIVEMLYSTSLVVVVALGEETGSSPRKLKIINTKRGSTICDLVFPSTILKVKLTRSRMIVLLEEQIYLYDISTMKLLHTIETSPNMAGICAISADQGSTDTSNSADNSGSIGSGPASGSGAGSGSASMTSTDSTPDAQSHSYLAYPSPPKTAMHDSLLVAGINTNGGSHSKQNNIQSVSNAPNRVGDVIIFDTDSLQPLCVIEAHKSALAAISLSSDGRLLATASDKGTIVRVFSVSTGAKLYQFRRGTYPTKVYSVAFSPDNRYVVTTSASGTVHIFRLGEDESLESKHKRKRASRQHETIAEETSATQDLDDEIEDDGDDSDVDDVESLEVVPSKQRKLSQGSSNSYTSMNSGISGMSEDGKEPKIDPIVDHARLSVARMIRRSSQTLGRKAAQKMGDFLPSKFASILEPTRHFASLKIASASKDVKSIAVLDSQVVHDMVPQMFLHSKDAAPASALDTQSMTEMALLHIFVVTSDGYLYVYGLDPERGGDCILLQQHSFDI.

The WD 1 repeat unit spans residues 19–57 (KPSSSVNFITFNQDGSCIAVGNNKGYSIFTTNPFTKCYD). The span at 162 to 171 (STDTSNSADN) shows a compositional bias: polar residues. The tract at residues 162–210 (STDTSNSADNSGSIGSGPASGSGAGSGSASMTSTDSTPDAQSHSYLAYP) is disordered. Residues 175–187 (IGSGPASGSGAGS) show a composition bias toward gly residues. Low complexity predominate over residues 188 to 198 (GSASMTSTDST). WD repeat units follow at residues 268-308 (AHKS…KLYQ) and 313-352 (TYPT…SLES). The short motif at 309–313 (FRRGT) is the L/FRRG motif element. The tract at residues 350 to 429 (LESKHKRKRA…ISGMSEDGKE (80 aa)) is disordered. Residues 375–394 (DLDDEIEDDGDDSDVDDVES) are compositionally biased toward acidic residues. Over residues 405-421 (LSQGSSNSYTSMNSGIS) the composition is skewed to polar residues. WD repeat units lie at residues 464-508 (DFLP…DMVP) and 518-558 (APAS…GGDC).

Belongs to the WD repeat PROPPIN family. Component of the PI(3,5)P2 regulatory complex.

It is found in the preautophagosomal structure membrane. It localises to the vacuole membrane. The protein localises to the endosome membrane. In terms of biological role, the PI(3,5)P2 regulatory complex regulates both the synthesis and turnover of phosphatidylinositol 3,5-bisphosphate (PtdIns(3,5)P2). Necessary for proper vacuole morphology. Plays an important role in osmotically-induced vacuole fragmentation. Required for cytoplasm to vacuole transport (Cvt) vesicle formation, pexophagy and starvation-induced autophagy. Involved in correct ATG9 trafficking to the pre-autophagosomal structure. Might also be involved in premeiotic DNA replication. In Meyerozyma guilliermondii (strain ATCC 6260 / CBS 566 / DSM 6381 / JCM 1539 / NBRC 10279 / NRRL Y-324) (Yeast), this protein is Autophagy-related protein 18 (ATG18).